Reading from the N-terminus, the 638-residue chain is Probable ATP-binding protein YheS (638 aa).

ABC transporter domains are found at residues 2-246 (IIFS…AQQT) and 313-531 (VMIE…STSE). Residues 34–41 (GKNGCGKS) and 349–356 (GKNGAGKS) contribute to the ATP site. The disordered stretch occupies residues 525–563 (EQNSTSENKVSEKVGDNENSVQNRKEQKRREAELRQQTA). Positions 547 to 558 (NRKEQKRREAEL) are enriched in basic and acidic residues.

Belongs to the ABC transporter superfamily. ABCF family. YheS subfamily.

In terms of biological role, genetic data indicate it may be involved in ribosome assembly or function. The polypeptide is Probable ATP-binding protein YheS (Haemophilus influenzae (strain ATCC 51907 / DSM 11121 / KW20 / Rd)).